We begin with the raw amino-acid sequence, 415 residues long: Esterase FrsA (415 aa).

This sequence belongs to the FrsA family. In terms of assembly, monomer in solution. Homodimer. Forms a 1:1 complex with the unphosphorylated form of the EIIA component of the glucose-specific PTS system (IIAGlc).

It catalyses the reaction a carboxylic ester + H2O = an alcohol + a carboxylate + H(+). Its function is as follows. Catalyzes the hydrolysis of esters. In vitro, prefers short chain alkanoate ester as substrate. Displays highest activity towards p-nitrophenyl acetate (pNPA). Has weaker activity towards p-nitrophenyl butyrate (pNPB). The chain is Esterase FrsA from Vibrio vulnificus (strain CMCP6).